Reading from the N-terminus, the 396-residue chain is Putative carbamoyltransferase YgeW (396 aa).

Carbamoyl phosphate contacts are provided by residues 71-74 (STRT), Gln-98, 165-168 (HPTQ), and 330-331 (CL).

The protein belongs to the aspartate/ornithine carbamoyltransferase superfamily. Homotrimer.

In Escherichia coli O157:H7, this protein is Putative carbamoyltransferase YgeW (ygeW).